The sequence spans 214 residues: Large ribosomal subunit protein uL4 (214 aa).

Residues 43-83 (RRQAGTHKAKSRSEVNRTTKKSIKQKGSGGARHGSRNAPIF) are disordered.

This sequence belongs to the universal ribosomal protein uL4 family. As to quaternary structure, part of the 50S ribosomal subunit.

Functionally, one of the primary rRNA binding proteins, this protein initially binds near the 5'-end of the 23S rRNA. It is important during the early stages of 50S assembly. It makes multiple contacts with different domains of the 23S rRNA in the assembled 50S subunit and ribosome. In terms of biological role, forms part of the polypeptide exit tunnel. This Hyphomonas neptunium (strain ATCC 15444) protein is Large ribosomal subunit protein uL4.